The following is a 186-amino-acid chain: Oligoribonuclease (186 aa).

An Exonuclease domain is found at 8-171; it reads LIWIDLEMTG…DDIRESIAEL (164 aa). The active site involves Tyr129.

This sequence belongs to the oligoribonuclease family.

Its subcellular location is the cytoplasm. 3'-to-5' exoribonuclease specific for small oligoribonucleotides. In Mannheimia succiniciproducens (strain KCTC 0769BP / MBEL55E), this protein is Oligoribonuclease.